The following is a 559-amino-acid chain: Nuclear envelope integral membrane protein (559 aa).

The N-terminal stretch at 1-15 is a signal peptide; it reads MRLLTLALLVAGSLA. Asparagine 67, asparagine 81, and asparagine 114 each carry an N-linked (GlcNAc...) asparagine glycan. The next 5 membrane-spanning stretches (helical) occupy residues 164 to 184, 192 to 212, 218 to 238, 267 to 287, and 290 to 310; these read YTSG…FIVW, IGVP…HFAW, IMIE…LISM, LIYF…ALII, and ICRG…KAVW. N-linked (GlcNAc...) asparagine glycans are attached at residues asparagine 408 and asparagine 465. Disordered stretches follow at residues 475 to 494 and 510 to 559; these read RRDS…PRMP and KNGR…DADE. Residues 517 to 526 show a composition bias toward polar residues; the sequence is PSSSTASGMT. The segment covering 530-539 has biased composition (basic and acidic residues); that stretch reads YMRKARRIDA.

This sequence belongs to the NEMP family.

Its subcellular location is the nucleus inner membrane. Functionally, contributes to nuclear envelope stiffness in germ cells. Required for fertility. The chain is Nuclear envelope integral membrane protein from Caenorhabditis elegans.